Here is a 690-residue protein sequence, read N- to C-terminus: Calpain-9 (690 aa).

The tract at residues 1–24 is disordered; that stretch reads MPYLYRAPGPQAHPVPKDARITHS. The region spanning 42-337 is the Calpain catalytic domain; that stretch reads LFEDADFPAS…FDKVEICNLT (296 aa). The Ca(2+) site is built by Leu81, Gly83, and Asp88. Residue Cys97 is part of the active site. Glu167 contributes to the Ca(2+) binding site. Active-site residues include His254 and Asn278. Ca(2+) contacts are provided by Glu284, Asp291, Leu312, Asp314, and Glu316. The tract at residues 338 to 521 is domain III; sequence PDALEEDAIH…PPDQETEEEQ (184 aa). A disordered region spans residues 498-519; it reads GNVDIDLPEPPKPTPPDQETEE. EF-hand domains are found at residues 518–552, 561–589, and 591–626; these read EEEQ…VLQK, LSLI…FKVF, and DKLK…AGFQ. The segment at 522–690 is domain IV; the sequence is RFRALFEQVA…NEFIHLTMNI (169 aa). Asp574, Ser576, Asn578, Lys580, Glu585, Asp604, Asp606, Ser608, Thr610, and Glu615 together coordinate Ca(2+).

Belongs to the peptidase C2 family. As to expression, expressed predominantly in stomach.

Functionally, calcium-regulated non-lysosomal thiol-protease. The sequence is that of Calpain-9 (CAPN9) from Homo sapiens (Human).